The following is a 167-amino-acid chain: MSEEESPYQLTKTFSNPKNNKIGLAIFLIGAFINLIHIYKPKGPSNNPTKRNYHISFGPPGKIRWFPLGIRKEVRSNVSGREIIIKMIITFILVQTTLITLDLYVFGATGLGLILSWKLFEVACANPEDEALLAERKQRLKEQREKKEQKKEQKKEKKTERRKKKKL.

The next 2 helical transmembrane spans lie at 21 to 41 and 87 to 107; these read KIGL…IYKP and MIIT…YVFG. Residues 136-159 show a composition bias toward basic and acidic residues; that stretch reads RKQRLKEQREKKEQKKEQKKEKKT. The tract at residues 136-167 is disordered; that stretch reads RKQRLKEQREKKEQKKEQKKEKKTERRKKKKL.

It localises to the membrane. This is an uncharacterized protein from Schizosaccharomyces pombe (strain 972 / ATCC 24843) (Fission yeast).